The following is a 60-amino-acid chain: Phycobilisome degradation protein NblA homolog 2 (60 aa).

This sequence to Synechococcus PCC 7942 NblA and some, to chloroplast ycf18.

This Synechocystis sp. (strain ATCC 27184 / PCC 6803 / Kazusa) protein is Phycobilisome degradation protein NblA homolog 2.